The chain runs to 474 residues: MAGKTLYDKLWDMHLVKQRDDGSALIYIDRHILHEVTSPQAFEGLRLAGRKPWRIDANIATPDHNVPTTRTERKGGIAAIADEVSRLQVQTLDENCDDFGITEFKMNDVRQGIVHVVGPEQGATLPGMTVVCGDSHTSTHGAFGALAHGIGTSEVEHVLATQCLVAKKMKNMLVKVEGRLPAGVTAKDIVLAVIGRIGTAGGNGHAIEFAGSAIRDLSIEGRMTICNMSIEAGARVGLVAVDQKTIDYVKGRPFAPSAEQWDQAVACWQGLVSDADARFDTVVELDAAQIKPQVSWGTSPEMVLAVDQNVPDPARESDPIKRGSIERALKYMGLRPNQAITDIQLDRVFIGSCTNSRIEDLRAAAEVARGRKVAATIKQALVVPGSGLVKEQAEKEGLDRIFIEAGFEWREPGCSMCLAMNPDRLESGEHCASTSNRNFEGRQGAGGRTHLVSPAMAAAAAVNGRFIDVRELLA.

The [4Fe-4S] cluster site is built by cysteine 353, cysteine 414, and cysteine 417.

The protein belongs to the aconitase/IPM isomerase family. LeuC type 1 subfamily. As to quaternary structure, heterodimer of LeuC and LeuD. Requires [4Fe-4S] cluster as cofactor.

The enzyme catalyses (2R,3S)-3-isopropylmalate = (2S)-2-isopropylmalate. It participates in amino-acid biosynthesis; L-leucine biosynthesis; L-leucine from 3-methyl-2-oxobutanoate: step 2/4. In terms of biological role, catalyzes the isomerization between 2-isopropylmalate and 3-isopropylmalate, via the formation of 2-isopropylmaleate. The chain is 3-isopropylmalate dehydratase large subunit from Pseudomonas aeruginosa (strain LESB58).